Consider the following 229-residue polypeptide: Lytic polysaccharide monooxygenase-like protein ham-7 (229 aa).

The N-terminal stretch at 1–17 (MLTSTLLALASAALASA) is a signal peptide. His18 is a Cu(2+) binding site. 2 cysteine pairs are disulfide-bonded: Cys47–Cys157 and Cys122–Cys178. N-linked (GlcNAc...) asparagine glycans are attached at residues Asn55, Asn98, Asn139, Asn174, and Asn180. Residue Ser206 is the site of GPI-anchor amidated serine attachment. The propeptide at 207-229 (AAASLARMAGWVPLVAGGLWLML) is removed in mature form.

The protein belongs to the X325 family. Cu(2+) is required as a cofactor.

Its subcellular location is the cell membrane. In terms of biological role, lytic polysaccharide monooxygenase-like protein that has diverged to biological functions other than polysaccharide degradation since it does not perform oxidative cleavage of polysaccharides. Acts as the major cell wall sensor that regulates MAK-1-dependent hyphal anastomosis, the fusion of hyphal cells. May also act as a cell surface-bound protein that functions in the copper-accumulation pathway. This Neurospora crassa (strain ATCC 24698 / 74-OR23-1A / CBS 708.71 / DSM 1257 / FGSC 987) protein is Lytic polysaccharide monooxygenase-like protein ham-7.